Here is a 666-residue protein sequence, read N- to C-terminus: Probable potassium transport system protein Kup (666 aa).

12 consecutive transmembrane segments (helical) span residues 16–36 (GFIIALGIVYGDIGTSPLYTM), 58–78 (ISLIIWTLTLITTIKYVLIAL), 100–120 (PWLIIPAMIGGATLLSDGALT), 141–161 (IYQNQTNIIITTLVILIVLFG), 165–185 (FGTGFIGKIFGPVMFIWFSFL), 221–241 (IFILGSIFLATTGAEALYSDL), 253–273 (WPFVKMCIVWSYCGQAAWILA), 294–314 (VYLVSLATLAAIIASQALISG), 343–363 (LYIPVINWILFAVTSCTVLAF), 373–393 (YGLAITITMLMTTILLKYYLI), 399–419 (PILAHLAMAFFALVEFIFFLA), and 424–444 (FMHGGYAVVILALAIVFVMFI).

This sequence belongs to the HAK/KUP transporter (TC 2.A.72) family.

Its subcellular location is the cell membrane. It catalyses the reaction K(+)(in) + H(+)(in) = K(+)(out) + H(+)(out). Functionally, transport of potassium into the cell. Likely operates as a K(+):H(+) symporter. The protein is Probable potassium transport system protein Kup of Streptococcus pyogenes serotype M4 (strain MGAS10750).